Reading from the N-terminus, the 278-residue chain is Pantothenate synthetase (278 aa).

31–38 provides a ligand contact to ATP; the sequence is MGALHEGH. H38 acts as the Proton donor in catalysis. Q62 serves as a coordination point for (R)-pantoate. Q62 contacts beta-alanine. 148 to 151 is a binding site for ATP; the sequence is GEKD. Q154 is a (R)-pantoate binding site. ATP-binding positions include L177 and 185–188; that span reads MSSR.

Belongs to the pantothenate synthetase family. In terms of assembly, homodimer.

It is found in the cytoplasm. The catalysed reaction is (R)-pantoate + beta-alanine + ATP = (R)-pantothenate + AMP + diphosphate + H(+). It functions in the pathway cofactor biosynthesis; (R)-pantothenate biosynthesis; (R)-pantothenate from (R)-pantoate and beta-alanine: step 1/1. In terms of biological role, catalyzes the condensation of pantoate with beta-alanine in an ATP-dependent reaction via a pantoyl-adenylate intermediate. The polypeptide is Pantothenate synthetase (Acidiphilium cryptum (strain JF-5)).